The sequence spans 617 residues: MRKTFLAITCASLLSPTFYSQAQEVSADETVVVTANRFKQIDGAVLAQTVTVTKEDIKRLQANSLFDVFRTLPSVEVAQYGGRGQSASIYVRGGSSSQVLVLVDGVRMPRAIMGGIDFNQFPINSVERIDYIRGARASIYGSEAISGVINIITRAPINDDSGRVSAGYGSNNHKKGTFVVSKPVGEGKHFKGVLGYEKTDGFNVKPQPGLNDGDEHGFETLNLKLGYQQNFSDNLSGYVGVSAYNNEYDYDNSSIWSGHEKKTGEVEYVGTDLSLEYNKDVYSSELKLAYGQQDNYDHKSGQNKSTGDHVAIEQFNAIWLNSYSVNEELSIGGGLDYRTEKLAKGYIAPSDRGPAKDYDPEKNPRTNFGVSAIAQYAYDVWTLEASVRNDDNNQFGNNTTWQTAAGWSFYEGYELTLSHGTAFRAPSFVDLYYPGYEMPNLKPEESENTELSLSGAVSIVDWTVTGYYNEIENMLIWEGAGMQNVGEAEIKGVELEVKLDTDIVSHEFYLDYKDPVDKSGAEDTQLAYRSKRGAKWNAYATFDQWTLGSQYLYQGERFNGSTRLPSYSLWNFTASYAVNQNWDINAKLSNAFDKDYEMYVGYVTPGRQYFVSADYRF.

The N-terminal stretch at 1 to 22 (MRKTFLAITCASLLSPTFYSQA) is a signal peptide. A TonB box motif is present at residues 29-36 (ETVVVTAN). In terms of domain architecture, TBDR plug spans 40–154 (QIDGAVLAQT…ISGVINIITR (115 aa)). The region spanning 159–617 (DDSGRVSAGY…QYFVSADYRF (459 aa)) is the TBDR beta-barrel domain. A TonB C-terminal box motif is present at residues 600 to 617 (VGYVTPGRQYFVSADYRF).

Belongs to the TonB-dependent receptor family. BtuB (TC 1.B.14.3.1) subfamily.

The protein resides in the cell outer membrane. Involved in the active translocation of vitamin B12 (cyanocobalamin) across the outer membrane to the periplasmic space. It derives its energy for transport by interacting with the trans-periplasmic membrane protein TonB. The sequence is that of Vitamin B12 transporter BtuB from Vibrio campbellii (strain ATCC BAA-1116).